The chain runs to 394 residues: Elongation factor Tu (394 aa).

The 195-residue stretch at 10–204 folds into the tr-type G domain; it reads KPHVNIGTIG…AVDSYIPQPI (195 aa). The interval 19–26 is G1; that stretch reads GHVDHGKT. 19–26 is a GTP binding site; it reads GHVDHGKT. Position 26 (Thr-26) interacts with Mg(2+). Residues 60–64 form a G2 region; sequence GITIS. The G3 stretch occupies residues 81 to 84; it reads DCPG. Residues 81–85 and 136–139 contribute to the GTP site; these read DCPGH and NKVD. The G4 stretch occupies residues 136-139; it reads NKVD. The G5 stretch occupies residues 174–176; the sequence is SAL.

The protein belongs to the TRAFAC class translation factor GTPase superfamily. Classic translation factor GTPase family. EF-Tu/EF-1A subfamily. As to quaternary structure, monomer.

It localises to the cytoplasm. The catalysed reaction is GTP + H2O = GDP + phosphate + H(+). GTP hydrolase that promotes the GTP-dependent binding of aminoacyl-tRNA to the A-site of ribosomes during protein biosynthesis. This chain is Elongation factor Tu, found in Rickettsia prowazekii (strain Madrid E).